We begin with the raw amino-acid sequence, 124 residues long: Protein archease (124 aa).

The Ca(2+) site is built by His-7, Asp-10, Asp-123, and Thr-124.

This sequence belongs to the archease family.

Activates the tRNA-splicing ligase complex by facilitating the enzymatic turnover of catalytic subunit RtcB. Acts by promoting the guanylylation of RtcB, a key intermediate step in tRNA ligation. Can also alter the NTP specificity of RtcB such that ATP, dGTP or ITP is used efficiently. May also act as a chaperone or modulator of proteins involved in DNA or RNA processing. The sequence is that of Protein archease from Thermotoga maritima (strain ATCC 43589 / DSM 3109 / JCM 10099 / NBRC 100826 / MSB8).